The following is a 102-amino-acid chain: ATP-dependent Clp protease adapter protein ClpS (102 aa).

The protein belongs to the ClpS family. As to quaternary structure, binds to the N-terminal domain of the chaperone ClpA.

Its function is as follows. Involved in the modulation of the specificity of the ClpAP-mediated ATP-dependent protein degradation. The chain is ATP-dependent Clp protease adapter protein ClpS from Shewanella oneidensis (strain ATCC 700550 / JCM 31522 / CIP 106686 / LMG 19005 / NCIMB 14063 / MR-1).